The chain runs to 61 residues: Small ribosomal subunit protein uS14 (61 aa).

Residues Cys-24, Cys-27, Cys-40, and Cys-43 each coordinate Zn(2+).

Belongs to the universal ribosomal protein uS14 family. Zinc-binding uS14 subfamily. In terms of assembly, part of the 30S ribosomal subunit. Contacts proteins S3 and S10. The cofactor is Zn(2+).

Functionally, binds 16S rRNA, required for the assembly of 30S particles and may also be responsible for determining the conformation of the 16S rRNA at the A site. The sequence is that of Small ribosomal subunit protein uS14 from Mycoplasma genitalium (strain ATCC 33530 / DSM 19775 / NCTC 10195 / G37) (Mycoplasmoides genitalium).